Consider the following 154-residue polypeptide: UPF0225 protein YE2246 (154 aa).

It belongs to the UPF0225 family.

This is UPF0225 protein YE2246 from Yersinia enterocolitica serotype O:8 / biotype 1B (strain NCTC 13174 / 8081).